Reading from the N-terminus, the 336-residue chain is MSVTDAELLEIREKLVKDETSEALILAKKAADKSPKEDGRAFELLGEVYAELADVKKARSAFKEAVSRSKNLTNDQGYEKYLWLAQINDNGSKALKLYQKGVTILERLLIDKGEDADLKKKIQGAYCSIAELFMTDLCMQPDAEENCELYTKLALQIDATNAEALQTLASMRISQQKIEEAKDALSKCLQSISRAATEDSVDLPTYAVRTSIVRLLIEVEMHEEAHQLLVYLQKEDDQILDIWYLLGWNCYVEAQNLQEQGNGSEEEIKELLMNAKFYFISALGVYQKIGWDDEGIKSHIQELLEILNGLGVPNMDEENEEAEWETSENEEEMDED.

4 TPR repeats span residues 39–72 (GRAF…SKNL), 75–108 (DQGY…LERL), 110–143 (IDKG…QPDA), and 162–195 (AEAL…ISRA). The segment at 316-336 (DEENEEAEWETSENEEEMDED) is disordered.

This sequence belongs to the ACL4 family.

The protein resides in the cytoplasm. Its subcellular location is the nucleus. It localises to the nucleolus. In terms of biological role, acts as a chaperone for the L4 ribosomal subunit encoded by rpl4A and rpl4B, required for hierarchical ribosome assembly. Shields ribosomal protein L4 until timely release and insertion into the pre-ribosome is possible, once ribosomal protein L18 is present. The sequence is that of Probable assembly chaperone of rpl4 from Schizosaccharomyces pombe (strain 972 / ATCC 24843) (Fission yeast).